The primary structure comprises 490 residues: Cruciferin BnC1 (490 aa).

The first 23 residues, 1–23, serve as a signal peptide directing secretion; sequence MARLSSLLSFSLALLIFLHGSTA. 2 cysteine pairs are disulfide-bonded: cysteine 30/cysteine 63 and cysteine 106/cysteine 307. Cupin type-1 domains are found at residues 35 to 263 and 313 to 462; these read LNAL…RTAQ and DNLD…EEAR. A Phosphothreonine modification is found at threonine 109. The tract at residues 113 to 164 is disordered; sequence SSVFQPSGGSPSGEGQGQGQQGQGQGHQGQGQGQQGQQGQQGQQSQGQGFRD. Gly residues predominate over residues 122–148; the sequence is SPSGEGQGQGQQGQGQGHQGQGQGQQG. The span at 149–161 shows a compositional bias: low complexity; the sequence is QQGQQGQQSQGQG. Tyrosine 330 bears the Phosphotyrosine mark. At serine 332 the chain carries Phosphoserine. Threonine 426 is subject to Phosphothreonine.

This sequence belongs to the 11S seed storage protein (globulins) family. As to quaternary structure, hexamer; each subunit is composed of an acidic and a basic chain derived from a single precursor and linked by a disulfide bond.

This is a seed storage protein. This is Cruciferin BnC1 (BnC1) from Brassica napus (Rape).